A 706-amino-acid chain; its full sequence is Polyribonucleotide nucleotidyltransferase (706 aa).

Mg(2+) is bound by residues Asp-486 and Asp-492. Residues 553–612 (PRIHTIKISTDKIKDVIGKGGSVIRALTEETGTTIEIEDDGTVKIASTDGEKAKHAIRRI) form the KH domain. The 69-residue stretch at 622–690 (GRVYQGKVTR…RQGRVRLSIK (69 aa)) folds into the S1 motif domain.

Belongs to the polyribonucleotide nucleotidyltransferase family. As to quaternary structure, component of the RNA degradosome, which is a multiprotein complex involved in RNA processing and mRNA degradation. Mg(2+) is required as a cofactor.

The protein resides in the cytoplasm. The enzyme catalyses RNA(n+1) + phosphate = RNA(n) + a ribonucleoside 5'-diphosphate. Functionally, involved in mRNA degradation. Catalyzes the phosphorolysis of single-stranded polyribonucleotides processively in the 3'- to 5'-direction. The polypeptide is Polyribonucleotide nucleotidyltransferase (Pectobacterium carotovorum subsp. carotovorum (strain PC1)).